We begin with the raw amino-acid sequence, 240 residues long: Ubiquinone biosynthesis O-methyltransferase (240 aa).

S-adenosyl-L-methionine is bound by residues Arg-44, Gly-64, Asp-85, and Met-129.

It belongs to the methyltransferase superfamily. UbiG/COQ3 family.

It carries out the reaction a 3-demethylubiquinol + S-adenosyl-L-methionine = a ubiquinol + S-adenosyl-L-homocysteine + H(+). It catalyses the reaction a 3-(all-trans-polyprenyl)benzene-1,2-diol + S-adenosyl-L-methionine = a 2-methoxy-6-(all-trans-polyprenyl)phenol + S-adenosyl-L-homocysteine + H(+). It participates in cofactor biosynthesis; ubiquinone biosynthesis. Its function is as follows. O-methyltransferase that catalyzes the 2 O-methylation steps in the ubiquinone biosynthetic pathway. The chain is Ubiquinone biosynthesis O-methyltransferase from Escherichia coli O6:K15:H31 (strain 536 / UPEC).